The following is a 266-amino-acid chain: Type III pantothenate kinase (266 aa).

Residue 6–13 (DAGNTNIV) coordinates ATP. 107–110 (GADR) lines the substrate pocket. Catalysis depends on D109, which acts as the Proton acceptor. D129 is a K(+) binding site. T132 is an ATP binding site. A substrate-binding site is contributed by T184.

Belongs to the type III pantothenate kinase family. Homodimer. NH4(+) serves as cofactor. It depends on K(+) as a cofactor.

It localises to the cytoplasm. The catalysed reaction is (R)-pantothenate + ATP = (R)-4'-phosphopantothenate + ADP + H(+). It functions in the pathway cofactor biosynthesis; coenzyme A biosynthesis; CoA from (R)-pantothenate: step 1/5. Its function is as follows. Catalyzes the phosphorylation of pantothenate (Pan), the first step in CoA biosynthesis. The sequence is that of Type III pantothenate kinase from Acidiphilium cryptum (strain JF-5).